Consider the following 557-residue polypeptide: Nicotinate phosphoribosyltransferase 2 (557 aa).

Residues Tyr31 and Thr219 each coordinate nicotinate. His222 carries the phosphohistidine modification. Arg329 is a nicotinate binding site. 5-phospho-alpha-D-ribose 1-diphosphate is bound at residue Thr391.

The protein belongs to the NAPRTase family. It depends on Mg(2+) as a cofactor. Requires Mn(2+) as cofactor. In terms of processing, transiently phosphorylated on a His residue during the reaction cycle. Phosphorylation strongly increases the affinity for substrates and increases the rate of nicotinate D-ribonucleotide production. Dephosphorylation regenerates the low-affinity form of the enzyme, leading to product release.

The enzyme catalyses nicotinate + 5-phospho-alpha-D-ribose 1-diphosphate + ATP + H2O = nicotinate beta-D-ribonucleotide + ADP + phosphate + diphosphate. It functions in the pathway cofactor biosynthesis; NAD(+) biosynthesis; nicotinate D-ribonucleotide from nicotinate: step 1/1. Functionally, catalyzes the first step in the biosynthesis of NAD from nicotinic acid, the ATP-dependent synthesis of beta-nicotinate D-ribonucleotide from nicotinate and 5-phospho-D-ribose 1-phosphate. Helps prevent cellular oxidative stress via its role in NAD biosynthesis. The polypeptide is Nicotinate phosphoribosyltransferase 2 (Arabidopsis thaliana (Mouse-ear cress)).